The following is a 207-amino-acid chain: Large ribosomal subunit protein bL25 (207 aa).

It belongs to the bacterial ribosomal protein bL25 family. CTC subfamily. As to quaternary structure, part of the 50S ribosomal subunit; part of the 5S rRNA/L5/L18/L25 subcomplex. Contacts the 5S rRNA. Binds to the 5S rRNA independently of L5 and L18.

Functionally, this is one of the proteins that binds to the 5S RNA in the ribosome where it forms part of the central protuberance. This is Large ribosomal subunit protein bL25 from Dictyoglomus turgidum (strain DSM 6724 / Z-1310).